The following is a 334-amino-acid chain: Dual specificity mitogen-activated protein kinase kinase 6 (334 aa).

Over residues methionine 1–proline 11 the composition is skewed to basic residues. Positions methionine 1–aspartate 34 are disordered. The tract at residues serine 4–alanine 19 is d domain. The Protein kinase domain maps to leucine 53–phenylalanine 314. ATP is bound by residues leucine 59–valine 67 and lysine 82. The active-site Proton acceptor is the aspartate 179. Serine 207 is modified (phosphoserine; by MAPK3). Threonine 211 carries the post-translational modification Phosphothreonine; by MAPK3. The DVD domain stretch occupies residues histidine 311–aspartate 334.

Belongs to the protein kinase superfamily. STE Ser/Thr protein kinase family. MAP kinase kinase subfamily. In terms of assembly, dimer. Interacts (via its D domain) with its substrates MAPK11, MAPK12, MAPK13 and MAPK14. Interacts (via its DVD domain) with MAP3Ks activators like MAP3K5/ASK1, MAP3K1/MEKK1, MAP3K2/MEKK2, MAP3K3/MEKK3, MAP3K4/MEKK4, MAP3K7/TAK1, MAP3K11/MLK3 and MAP3K17/TAOK2. Interacts with DCTN1. Interacts with EIF2AK2/PKR. In terms of processing, weakly autophosphorylated. Phosphorylated at Ser-207 and Thr-211 by the majority of M3Ks, such as MAP3K5/ASK1, MAP3K1/MEKK1, MAP3K2/MEKK2, MAP3K3/MEKK3, MAP3K4/MEKK4, MAP3K7/TAK1, MAP3K11/MLK3 and MAP3K17/TAOK2. In response to genotoxic stress, MAP3K-phosphorylated MAP2K6 is ubiquitinated and degraded by the SCF(FBXO31) complex.

It is found in the nucleus. Its subcellular location is the cytoplasm. The protein localises to the cytoskeleton. The catalysed reaction is L-seryl-[protein] + ATP = O-phospho-L-seryl-[protein] + ADP + H(+). The enzyme catalyses L-threonyl-[protein] + ATP = O-phospho-L-threonyl-[protein] + ADP + H(+). It catalyses the reaction L-tyrosyl-[protein] + ATP = O-phospho-L-tyrosyl-[protein] + ADP + H(+). With respect to regulation, activated by dual phosphorylation on Ser-207 and Thr-211 in response to a variety of cellular stresses, including UV radiation, osmotic shock, hypoxia, inflammatory cytokines, interferon gamma (IFNG), and less often by growth factors. MAP2K6/MKK6 is activated by the majority of M3Ks, such as MAP3K5/ASK1, MAP3K1/MEKK1, MAP3K2/MEKK2, MAP3K3/MEKK3, MAP3K4/MEKK4, MAP3K7/TAK1, MAP3K11/MLK3 and MAP3K17/TAOK2. Dual specificity protein kinase which acts as an essential component of the MAP kinase signal transduction pathway. With MAP3K3/MKK3, catalyzes the concomitant phosphorylation of a threonine and a tyrosine residue in the MAP kinases p38 MAPK11, MAPK12, MAPK13 and MAPK14 and plays an important role in the regulation of cellular responses to cytokines and all kinds of stresses. Especially, MAP2K3/MKK3 and MAP2K6/MKK6 are both essential for the activation of MAPK11 and MAPK13 induced by environmental stress, whereas MAP2K6/MKK6 is the major MAPK11 activator in response to TNF. MAP2K6/MKK6 also phosphorylates and activates PAK6. The p38 MAP kinase signal transduction pathway leads to direct activation of transcription factors. Nuclear targets of p38 MAP kinase include the transcription factors ATF2 and ELK1. Within the p38 MAPK signal transduction pathway, MAP3K6/MKK6 mediates phosphorylation of STAT4 through MAPK14 activation, and is therefore required for STAT4 activation and STAT4-regulated gene expression in response to IL-12 stimulation. The pathway is also crucial for IL-6-induced SOCS3 expression and down-regulation of IL-6-mediated gene induction; and for IFNG-dependent gene transcription. Has a role in osteoclast differentiation through NF-kappa-B transactivation by TNFSF11, and in endochondral ossification and since SOX9 is another likely downstream target of the p38 MAPK pathway. MAP2K6/MKK6 mediates apoptotic cell death in thymocytes. Acts also as a regulator for melanocytes dendricity, through the modulation of Rho family GTPases. The sequence is that of Dual specificity mitogen-activated protein kinase kinase 6 (Map2k6) from Mus musculus (Mouse).